The sequence spans 1023 residues: Peroxisome proliferator-activated receptor gamma coactivator 1-beta (1023 aa).

Residues 1 to 91 are abolishes DNA transcriptional activity when missing; sequence MAGNDCGALL…LFQIDSENEA (91 aa). Positions 122–148 are disordered; that stretch reads LSCTSASPAPSSAPPSPAPEKPSAPAP. Residues 132 to 146 show a composition bias toward pro residues; it reads SSAPPSPAPEKPSAP. The short motif at 156–160 is the LXXLL motif 1 element; sequence LQKLL. Disordered regions lie at residues 165 to 210, 237 to 278, and 302 to 331; these read YPTS…QSQS, LQSP…PGAP, and RKLP…WSRH. An LXXLL motif 2 motif is present at residues 343 to 347; the sequence is LRELL. Disordered stretches follow at residues 369–463, 520–567, 601–623, and 636–683; these read LTPR…LPWT, RELG…QLPP, TAGL…FKPD, and LPSP…GQKR. Ser384 carries the post-translational modification Phosphoserine. Over residues 412-422 the composition is skewed to basic and acidic residues; it reads LRLEVKREVRR. A compositionally biased stretch (acidic residues) spans 429 to 450; that stretch reads QEEEDEEEEEEEEEEEKEEEEE. Phosphoserine is present on Ser524. The segment covering 614-623 has biased composition (basic and acidic residues); the sequence is PTEEDPFKPD. Ser638 bears the Phosphoserine mark. Residues 691 to 694 carry the HCFC1-binding-motif (HBM) motif; sequence DHDY. Disordered regions lie at residues 717 to 758 and 779 to 867; these read VHLE…LRDH and DLAS…WSPA. Low complexity predominate over residues 793–805; it reads EDSSSSSGESSFL. Over residues 806–825 the composition is skewed to acidic residues; it reads PEEEEEEGEEEEEDDEEEDS. Positions 849–866 are enriched in low complexity; it reads CSRSRSSSGSSPCHSWSP. Residues 902–976 enclose the RRM domain; the sequence is RVVYIQNLSS…RNEPSFQLSY (75 aa).

As to quaternary structure, interacts with hepatocyte nuclear factor 4-alpha/HNF4A, Sterol regulatory binding transcription factor 1/SREBF1, PPAR-alpha/PPARA, thyroid hormone receptor beta/THRB and host cell factor/HCFC1. Interacts with estrogen-related receptor gamma/ESRRG and alpha/ESRRA. Interacts with PRDM16. Interacts with estrogen receptor alpha/ESR1. In terms of tissue distribution, ubiquitous with higher expression in heart, brain and skeletal muscle.

Its subcellular location is the nucleus. Plays a role of stimulator of transcription factors and nuclear receptors activities. Activates transcriptional activity of estrogen receptor alpha, nuclear respiratory factor 1 (NRF1) and glucocorticoid receptor in the presence of glucocorticoids. May play a role in constitutive non-adrenergic-mediated mitochondrial biogenesis as suggested by increased basal oxygen consumption and mitochondrial number when overexpressed. May be involved in fat oxidation and non-oxidative glucose metabolism and in the regulation of energy expenditure. Induces the expression of PERM1 in the skeletal muscle in an ESRRA-dependent manner. This is Peroxisome proliferator-activated receptor gamma coactivator 1-beta (PPARGC1B) from Homo sapiens (Human).